Here is a 300-residue protein sequence, read N- to C-terminus: NAD kinase (300 aa).

Asp-75 (proton acceptor) is an active-site residue. NAD(+) contacts are provided by residues 75–76 (DG), 149–150 (ND), Arg-177, Asp-179, 190–195 (TAYALS), Ala-214, and Gln-248.

The protein belongs to the NAD kinase family. The cofactor is a divalent metal cation.

The protein resides in the cytoplasm. It catalyses the reaction NAD(+) + ATP = ADP + NADP(+) + H(+). Involved in the regulation of the intracellular balance of NAD and NADP, and is a key enzyme in the biosynthesis of NADP. Catalyzes specifically the phosphorylation on 2'-hydroxyl of the adenosine moiety of NAD to yield NADP. The protein is NAD kinase of Burkholderia ambifaria (strain MC40-6).